The following is a 496-amino-acid chain: Aspartyl/glutamyl-tRNA(Asn/Gln) amidotransferase subunit B (496 aa).

It belongs to the GatB/GatE family. GatB subfamily. As to quaternary structure, heterotrimer of A, B and C subunits.

It catalyses the reaction L-glutamyl-tRNA(Gln) + L-glutamine + ATP + H2O = L-glutaminyl-tRNA(Gln) + L-glutamate + ADP + phosphate + H(+). The catalysed reaction is L-aspartyl-tRNA(Asn) + L-glutamine + ATP + H2O = L-asparaginyl-tRNA(Asn) + L-glutamate + ADP + phosphate + 2 H(+). Allows the formation of correctly charged Asn-tRNA(Asn) or Gln-tRNA(Gln) through the transamidation of misacylated Asp-tRNA(Asn) or Glu-tRNA(Gln) in organisms which lack either or both of asparaginyl-tRNA or glutaminyl-tRNA synthetases. The reaction takes place in the presence of glutamine and ATP through an activated phospho-Asp-tRNA(Asn) or phospho-Glu-tRNA(Gln). In Natronomonas pharaonis (strain ATCC 35678 / DSM 2160 / CIP 103997 / JCM 8858 / NBRC 14720 / NCIMB 2260 / Gabara) (Halobacterium pharaonis), this protein is Aspartyl/glutamyl-tRNA(Asn/Gln) amidotransferase subunit B.